The following is a 421-amino-acid chain: Actin-related protein 6 (421 aa).

Belongs to the actin family. ARP6 subfamily. In terms of assembly, component of the SWR1 chromatin-remodeling complex composed of at least ARP6/ESD1/SUF3, PIE1, SWC6, SWC2 and H2AZs (HTA8, HTA9, HTA11). Interacts directly with SWC6/SEF and PIE1. Also interacts with H2A.F/Z proteins. As to expression, mostly expressed in flowers, and, to a lower extent, in seedlings, shoot apex, stems, siliques, seeds, and roots (at protein level).

The protein resides in the nucleus. It localises to the cytoplasm. Component of the SWR1 complex which mediates the ATP-dependent exchange of histone H2A for the H2A variant H2A.F/Z leading to transcriptional regulation of selected genes (e.g. FLC) by chromatin remodeling. Binds to the promoter region of FLC chromatin. Required for the activation of FLC and FLC/MAF genes expression to levels that inhibit flowering, through both histone H3 and H4 acetylation and methylation mechanisms. Involved in several developmental processes including organization of plant organs, leaves formation, flowering time repression, and fertility. Modulates photoperiod-dependent epidermal leaves cell development; promotes cell division in long days, and cell expansion/division in short days. May be involved in the regulation of pathogenesis-related proteins (PRs). The chain is Actin-related protein 6 (ARP6) from Arabidopsis thaliana (Mouse-ear cress).